Consider the following 299-residue polypeptide: Putative S-adenosyl-L-methionine-dependent methyltransferase MAB_0027c (299 aa).

S-adenosyl-L-methionine contacts are provided by residues aspartate 126 and 155–156; that span reads DL.

Belongs to the UPF0677 family.

Its function is as follows. Exhibits S-adenosyl-L-methionine-dependent methyltransferase activity. The sequence is that of Putative S-adenosyl-L-methionine-dependent methyltransferase MAB_0027c from Mycobacteroides abscessus (strain ATCC 19977 / DSM 44196 / CCUG 20993 / CIP 104536 / JCM 13569 / NCTC 13031 / TMC 1543 / L948) (Mycobacterium abscessus).